Reading from the N-terminus, the 198-residue chain is ATP-dependent Clp protease proteolytic subunit 2 (198 aa).

Catalysis depends on S94, which acts as the Nucleophile. Residue H119 is part of the active site.

It belongs to the peptidase S14 family. As to quaternary structure, fourteen ClpP subunits assemble into 2 heptameric rings which stack back to back to give a disk-like structure with a central cavity, resembling the structure of eukaryotic proteasomes.

Its subcellular location is the cytoplasm. The enzyme catalyses Hydrolysis of proteins to small peptides in the presence of ATP and magnesium. alpha-casein is the usual test substrate. In the absence of ATP, only oligopeptides shorter than five residues are hydrolyzed (such as succinyl-Leu-Tyr-|-NHMec, and Leu-Tyr-Leu-|-Tyr-Trp, in which cleavage of the -Tyr-|-Leu- and -Tyr-|-Trp bonds also occurs).. In terms of biological role, cleaves peptides in various proteins in a process that requires ATP hydrolysis. Has a chymotrypsin-like activity. Plays a major role in the degradation of misfolded proteins. The chain is ATP-dependent Clp protease proteolytic subunit 2 from Borreliella burgdorferi (strain ATCC 35210 / DSM 4680 / CIP 102532 / B31) (Borrelia burgdorferi).